The sequence spans 574 residues: Proline--tRNA ligase (574 aa).

The protein belongs to the class-II aminoacyl-tRNA synthetase family. ProS type 1 subfamily. Homodimer.

It is found in the cytoplasm. It catalyses the reaction tRNA(Pro) + L-proline + ATP = L-prolyl-tRNA(Pro) + AMP + diphosphate. Functionally, catalyzes the attachment of proline to tRNA(Pro) in a two-step reaction: proline is first activated by ATP to form Pro-AMP and then transferred to the acceptor end of tRNA(Pro). As ProRS can inadvertently accommodate and process non-cognate amino acids such as alanine and cysteine, to avoid such errors it has two additional distinct editing activities against alanine. One activity is designated as 'pretransfer' editing and involves the tRNA(Pro)-independent hydrolysis of activated Ala-AMP. The other activity is designated 'posttransfer' editing and involves deacylation of mischarged Ala-tRNA(Pro). The misacylated Cys-tRNA(Pro) is not edited by ProRS. This Marinomonas sp. (strain MWYL1) protein is Proline--tRNA ligase.